Consider the following 265-residue polypeptide: Uroporphyrinogen-III synthase (265 aa).

This sequence belongs to the uroporphyrinogen-III synthase family. As to quaternary structure, monomer.

It localises to the cytoplasm. The protein resides in the cytosol. The enzyme catalyses hydroxymethylbilane = uroporphyrinogen III + H2O. The protein operates within porphyrin-containing compound metabolism; protoporphyrin-IX biosynthesis; coproporphyrinogen-III from 5-aminolevulinate: step 3/4. In terms of biological role, catalyzes cyclization of the linear tetrapyrrole, hydroxymethylbilane, to the macrocyclic uroporphyrinogen III, the branch point for the various sub-pathways leading to the wide diversity of porphyrins. Porphyrins act as cofactors for a multitude of enzymes that perform a variety of processes within the cell such as methionine synthesis (vitamin B12) or oxygen transport (heme). This Mus musculus (Mouse) protein is Uroporphyrinogen-III synthase (Uros).